The following is a 286-amino-acid chain: D-tagatose-1,6-bisphosphate aldolase subunit KbaY (286 aa).

Asp82 serves as the catalytic Proton donor. His83 and His180 together coordinate Zn(2+). Residue Gly181 coordinates dihydroxyacetone phosphate. Position 208 (His208) interacts with Zn(2+). Dihydroxyacetone phosphate contacts are provided by residues Gly209–Ser211 and Asn230–Thr233.

The protein belongs to the class II fructose-bisphosphate aldolase family. TagBP aldolase KbaY subfamily. As to quaternary structure, homotetramer. Forms a complex with KbaZ. Requires Zn(2+) as cofactor.

It catalyses the reaction D-tagatofuranose 1,6-bisphosphate = D-glyceraldehyde 3-phosphate + dihydroxyacetone phosphate. It participates in carbohydrate metabolism; D-tagatose 6-phosphate degradation; D-glyceraldehyde 3-phosphate and glycerone phosphate from D-tagatose 6-phosphate: step 2/2. Catalytic subunit of the tagatose-1,6-bisphosphate aldolase KbaYZ, which catalyzes the reversible aldol condensation of dihydroxyacetone phosphate (DHAP or glycerone-phosphate) with glyceraldehyde 3-phosphate (G3P) to produce tagatose 1,6-bisphosphate (TBP). Requires KbaZ subunit for full activity and stability. Is involved in the catabolism of N-acetylgalactosamine and D-galactosamine. This is D-tagatose-1,6-bisphosphate aldolase subunit KbaY (kbaY) from Escherichia coli.